A 550-amino-acid chain; its full sequence is MAQLAGQPILILPEGTQRYVGRDAQRMNILAARIIAETVRTTLGPKGMDKMLVDSLGDIVITNDGATILDEMDIQHPAAKMMVEVAKTQDKEAGDGTTTAVVIAGELLKKAEELLDQNIHPSIVIKGYMLAAEKAQEILDSIAKEVKPDDEEVLLKAAMTAITGKAAEEEREYLAKLAVEAVKLVAEEKDGKFKVDIDNIKFEKKEGGAVSDTKLIRGVVIDKEVVHPGMPKRVEKAKIALINDALEVKETETDAEIRITSPEQLQAFLEQEEKMLKEMVDKIKEVGANVVFVQKGIDDLAQHYLAKYGILAVRRVKKSDMEKLAKATGAKIVTNIRDLTPEDLGEAELVEERKVAGENMIFVEGCKNPKAVTILIRGGTEHVVDEVERALEDAVKVVKDILEDGKIIAGGGAAEIELSIKLDEYAKEVGGKEQLAIEAFAEALKVIPRTLAENAGLDPIETLVKVIAAHKEKGPTIGIDVYEGEPADMMERGVIEPVRVKKQAIKSASEAAIMILRIDDVIAAQKLEKEKEGEKGGGGSEDFSSSSDLD.

The interval 529–550 (KEKEGEKGGGGSEDFSSSSDLD) is disordered. Low complexity predominate over residues 541-550 (EDFSSSSDLD).

The protein belongs to the TCP-1 chaperonin family. Forms an oligomeric complex of eight-membered rings.

Functionally, molecular chaperone; binds unfolded polypeptides in vitro, and has a weak ATPase activity. The chain is Thermosome subunit (ths) from Pyrococcus abyssi (strain GE5 / Orsay).